The sequence spans 453 residues: Probable glucan endo-1,3-beta-glucosidase eglC (453 aa).

Residues 1–18 (MQTRQLLALALAVAATEA) form the signal peptide. Glu-128 functions as the Proton donor in the catalytic mechanism. Asn-183 carries N-linked (GlcNAc...) asparagine glycosylation. The Nucleophile role is filled by Glu-239. 3 N-linked (GlcNAc...) asparagine glycosylation sites follow: Asn-364, Asn-368, and Asn-376. Polar residues predominate over residues 370–380 (TYPGSWNSTRP). A disordered region spans residues 370 to 423 (TYPGSWNSTRPGANGGSSGSSGSSGSSGSSGSSGSSGSGASGHSSSTGSSSFPS). 2 stretches are compositionally biased toward low complexity: residues 389-402 (SSGSSGSSGSSGSS) and 410-423 (SGHSSSTGSSSFPS). A lipid anchor (GPI-anchor amidated asparagine) is attached at Asn-430. Positions 431 to 453 (SASGLSGSLFGAVAAVFVALAAL) are cleaved as a propeptide — removed in mature form.

Belongs to the glycosyl hydrolase 17 family. The GPI-anchor is attached to the protein in the endoplasmic reticulum and serves to target the protein to the cell surface. There, the glucosamine-inositol phospholipid moiety is cleaved off and the GPI-modified mannoprotein is covalently attached via its lipidless GPI glycan remnant to the 1,6-beta-glucan of the outer cell wall layer.

The protein localises to the cell membrane. It is found in the secreted. It localises to the cell wall. The catalysed reaction is Hydrolysis of (1-&gt;3)-beta-D-glucosidic linkages in (1-&gt;3)-beta-D-glucans.. Glucanases play a role in cell expansion during growth, in cell-cell fusion during mating, and in spore release during sporulation. This enzyme may be involved in beta-glucan degradation and also function biosynthetically as a transglycosylase. The protein is Probable glucan endo-1,3-beta-glucosidase eglC (eglC) of Aspergillus clavatus (strain ATCC 1007 / CBS 513.65 / DSM 816 / NCTC 3887 / NRRL 1 / QM 1276 / 107).